Reading from the N-terminus, the 362-residue chain is Chorismate synthase (362 aa).

NADP(+) is bound at residue Arg-46. Residues 122-124, 238-239, Gly-278, 293-297, and Arg-319 contribute to the FMN site; these read RSS, NA, and KPTPS.

Belongs to the chorismate synthase family. As to quaternary structure, homotetramer. FMNH2 is required as a cofactor.

It carries out the reaction 5-O-(1-carboxyvinyl)-3-phosphoshikimate = chorismate + phosphate. The protein operates within metabolic intermediate biosynthesis; chorismate biosynthesis; chorismate from D-erythrose 4-phosphate and phosphoenolpyruvate: step 7/7. In terms of biological role, catalyzes the anti-1,4-elimination of the C-3 phosphate and the C-6 proR hydrogen from 5-enolpyruvylshikimate-3-phosphate (EPSP) to yield chorismate, which is the branch point compound that serves as the starting substrate for the three terminal pathways of aromatic amino acid biosynthesis. This reaction introduces a second double bond into the aromatic ring system. This is Chorismate synthase from Campylobacter jejuni subsp. doylei (strain ATCC BAA-1458 / RM4099 / 269.97).